The chain runs to 307 residues: Plastid division protein PDV2 (307 aa).

The residue at position 1 (M1) is an N-acetylmethionine. The Cytoplasmic portion of the chain corresponds to 1–213; that stretch reads MEDEEGIGLI…SGGSSHGVIR (213 aa). The tract at residues 28–66 is disordered; the sequence is SSTTVSDNGDGNEDLSPGEGRKSEIIGNQDKDFDSISSE. Residues 46 to 61 show a composition bias toward basic and acidic residues; the sequence is EGRKSEIIGNQDKDFD. S50 is subject to Phosphoserine. Residues 76-103 are a coiled coil; sequence LLRIRDALEALESQLASLQNLRQRQQYE. The interval 174–206 is disordered; sequence HLPSKKKSDANGFGSGHVRNEAEAKSPNGGSGG. The helical transmembrane segment at 214 to 234 threads the bilayer; that stretch reads FLGSVAKIVLPIIGVISLLSA. Residues 235–307 are Chloroplast intermembrane-facing; it reads SGYGPEMRKR…AKRDVTYGYG (73 aa). The segment at 235–307 is ARC6 binding; it reads SGYGPEMRKR…AKRDVTYGYG (73 aa).

In terms of assembly, interacts (via C-terminus) with ARC6 (via C-terminus) in the chloroplast intermembrane space; this interaction induces ARC6 homodimerization and leads to the formation of a heterotetramer containing two ARC6 and two PDV2 subunits. Interacts with ARC5/DRP5B. Mostly expressed in young leaves.

The protein localises to the plastid. The protein resides in the chloroplast outer membrane. Its function is as follows. Component of the plastid division machinery consisting in a binary fission accomplished by the simultaneous constriction of the FtsZ ring on the stromal side of the inner envelope membrane, and the ARC5/DRP5B ring on the cytosolic side of the outer envelope membrane. Positive factor of chloroplast division required, with a dosage effect, to mediate the recruitment and dimerization of ARC5/DRP5B at the midplastid constriction site in the cytoplasm at plastid outer envelope membranes (OEMs). Prevents ARC5/DRP5B GTPase acrivity. Relays plastid division site position between stroma and outer surface via interactions with the cytoplasmic ARC5/DRP5B and the inner membrane ARC6 that recruits stromal FtsZ ring. Binding to phosphatidylinositol 4-phosphate (PI4P) modulates negatively chloroplast division. The protein is Plastid division protein PDV2 of Arabidopsis thaliana (Mouse-ear cress).